A 139-amino-acid chain; its full sequence is uncharacterized protein (139 aa).

The next 3 helical transmembrane spans lie at 19–39 (CIIF…FILG), 64–84 (IFNV…FNLF), and 89–109 (AITI…WILG).

The protein resides in the cell membrane. This is an uncharacterized protein from Methanocaldococcus jannaschii (strain ATCC 43067 / DSM 2661 / JAL-1 / JCM 10045 / NBRC 100440) (Methanococcus jannaschii).